Reading from the N-terminus, the 267-residue chain is MQALTNPFPIGSSSLIHCMTNEISCEMLANGILALGCKPVMADDPREVLDFTKQSQALFINLGHLSAEKEKAIRMAASYANQSSLPMVVDAVGVTTSSIRKSLVKDLLDYRPTVLKGNMSEIRSLVGLKHHGVGVDASAKDQETEDLLQVLKDWCQTYPGMSFLVTGPKDLIVSENQVAVLENGCTELDWITGTGDLVGALTAVFLSQGKTGFEASCLAVSYLNIAAEKIVVQGMGLEEFRYQVLNQLSLLRRDENWLDTIKGEVYE.

Position 41 (methionine 41) interacts with substrate. Residues lysine 116 and threonine 166 each contribute to the ATP site. A substrate-binding site is contributed by glycine 193.

It belongs to the Thz kinase family. Mg(2+) serves as cofactor.

It carries out the reaction 5-(2-hydroxyethyl)-4-methylthiazole + ATP = 4-methyl-5-(2-phosphooxyethyl)-thiazole + ADP + H(+). It participates in cofactor biosynthesis; thiamine diphosphate biosynthesis; 4-methyl-5-(2-phosphoethyl)-thiazole from 5-(2-hydroxyethyl)-4-methylthiazole: step 1/1. Its function is as follows. Catalyzes the phosphorylation of the hydroxyl group of 4-methyl-5-beta-hydroxyethylthiazole (THZ). The protein is Hydroxyethylthiazole kinase 2 of Streptococcus pneumoniae (strain P1031).